The primary structure comprises 393 residues: Chalcone synthase G (393 aa).

Residue Cys164 is part of the active site.

It belongs to the thiolase-like superfamily. Chalcone/stilbene synthases family. In terms of tissue distribution, expressed in seedlings after illumination with UV light. No expression detectable in flowers. It is not known for sure whether CHSG encodes a chalcone synthase or a very closely related condensing enzyme.

It catalyses the reaction (E)-4-coumaroyl-CoA + 3 malonyl-CoA + 3 H(+) = 2',4,4',6'-tetrahydroxychalcone + 3 CO2 + 4 CoA. It participates in secondary metabolite biosynthesis; flavonoid biosynthesis. The primary product of this enzyme is 4,2',4',6'-tetrahydroxychalcone (also termed naringenin-chalcone or chalcone) which can under specific conditions spontaneously isomerize into naringenin. The sequence is that of Chalcone synthase G (CHSG) from Petunia hybrida (Petunia).